We begin with the raw amino-acid sequence, 330 residues long: Ketol-acid reductoisomerase (NADP(+)) (330 aa).

The KARI N-terminal Rossmann domain maps to 1–181 (MNVYYEKDAD…GGTKAGVIET (181 aa)). NADP(+)-binding positions include 24–27 (YGSQ), R47, S50, S52, and 82–85 (DQNQ). The active site involves H107. G133 contacts NADP(+). The 146-residue stretch at 182–327 (NFKNETETDL…AKLRNMMSWL (146 aa)) folds into the KARI C-terminal knotted domain. The Mg(2+) site is built by D190, E194, E226, and E230. S251 serves as a coordination point for substrate.

The protein belongs to the ketol-acid reductoisomerase family. Mg(2+) is required as a cofactor.

It catalyses the reaction (2R)-2,3-dihydroxy-3-methylbutanoate + NADP(+) = (2S)-2-acetolactate + NADPH + H(+). It carries out the reaction (2R,3R)-2,3-dihydroxy-3-methylpentanoate + NADP(+) = (S)-2-ethyl-2-hydroxy-3-oxobutanoate + NADPH + H(+). It participates in amino-acid biosynthesis; L-isoleucine biosynthesis; L-isoleucine from 2-oxobutanoate: step 2/4. Its pathway is amino-acid biosynthesis; L-valine biosynthesis; L-valine from pyruvate: step 2/4. Its function is as follows. Involved in the biosynthesis of branched-chain amino acids (BCAA). Catalyzes an alkyl-migration followed by a ketol-acid reduction of (S)-2-acetolactate (S2AL) to yield (R)-2,3-dihydroxy-isovalerate. In the isomerase reaction, S2AL is rearranged via a Mg-dependent methyl migration to produce 3-hydroxy-3-methyl-2-ketobutyrate (HMKB). In the reductase reaction, this 2-ketoacid undergoes a metal-dependent reduction by NADPH to yield (R)-2,3-dihydroxy-isovalerate. The sequence is that of Ketol-acid reductoisomerase (NADP(+)) from Chlorobium chlorochromatii (strain CaD3).